Reading from the N-terminus, the 906-residue chain is Valine--tRNA ligase (906 aa).

The 'HIGH' region motif lies at 43 to 53 (PNVTGSLHIGH). The short motif at 548-552 (KMSKS) is the 'KMSKS' region element. Lysine 551 provides a ligand contact to ATP. A coiled-coil region spans residues 842-905 (EKARLTKDIA…EAALSRLASV (64 aa)).

It belongs to the class-I aminoacyl-tRNA synthetase family. ValS type 1 subfamily. Monomer.

Its subcellular location is the cytoplasm. It carries out the reaction tRNA(Val) + L-valine + ATP = L-valyl-tRNA(Val) + AMP + diphosphate. In terms of biological role, catalyzes the attachment of valine to tRNA(Val). As ValRS can inadvertently accommodate and process structurally similar amino acids such as threonine, to avoid such errors, it has a 'posttransfer' editing activity that hydrolyzes mischarged Thr-tRNA(Val) in a tRNA-dependent manner. This chain is Valine--tRNA ligase, found in Caulobacter vibrioides (strain ATCC 19089 / CIP 103742 / CB 15) (Caulobacter crescentus).